Here is a 489-residue protein sequence, read N- to C-terminus: Putative L,D-transpeptidase HI_1667 (489 aa).

Residues 10-29 (LSLFALSLSMMMSGCVLVGL) traverse the membrane as a helical segment. In terms of domain architecture, L,D-TPase catalytic spans 254–433 (NGIFVNIPSY…ETRKNTVLAS (180 aa)). Catalysis depends on His384, which acts as the Proton donor/acceptor. Cys403 functions as the Nucleophile in the catalytic mechanism.

This sequence belongs to the YkuD family.

The protein localises to the membrane. The protein operates within cell wall biogenesis; peptidoglycan biosynthesis. The chain is Putative L,D-transpeptidase HI_1667 from Haemophilus influenzae (strain ATCC 51907 / DSM 11121 / KW20 / Rd).